Consider the following 126-residue polypeptide: Large ribosomal subunit protein uL14m (126 aa).

It belongs to the universal ribosomal protein uL14 family. Component of the mitochondrial large ribosomal subunit (mt-LSU). Mature yeast 74S mitochondrial ribosomes consist of a small (37S) and a large (54S) subunit. The 37S small subunit contains a 15S ribosomal RNA (15S mt-rRNA) and at least 32 different proteins. The 54S large subunit contains a 21S rRNA (21S mt-rRNA) and at least 45 different proteins.

It localises to the mitochondrion. Functionally, component of the mitochondrial ribosome (mitoribosome), a dedicated translation machinery responsible for the synthesis of mitochondrial genome-encoded proteins, including at least some of the essential transmembrane subunits of the mitochondrial respiratory chain. The mitoribosomes are attached to the mitochondrial inner membrane and translation products are cotranslationally integrated into the membrane. The chain is Large ribosomal subunit protein uL14m (mrpl38) from Schizosaccharomyces pombe (strain 972 / ATCC 24843) (Fission yeast).